The chain runs to 144 residues: Hemoglobin subunit alpha-1 (144 aa).

An N-acetylserine modification is found at serine 1. A Globin domain is found at 1–144 (SLTAKDKSVV…VSAALADKYR (144 aa)). Histidine 61 lines the O2 pocket. Histidine 90 is a binding site for heme b.

Belongs to the globin family. In terms of assembly, heterotetramer of two alpha chains and two beta chains. Red blood cells.

Functionally, involved in oxygen transport from gills to the various peripheral tissues. The sequence is that of Hemoglobin subunit alpha-1 (hba1) from Oncorhynchus mykiss (Rainbow trout).